The primary structure comprises 411 residues: Serine hydroxymethyltransferase (411 aa).

120–122 (GHL) lines the (6S)-5,6,7,8-tetrahydrofolate pocket. An N6-(pyridoxal phosphate)lysine modification is found at Lys225. 350–352 (SPF) lines the (6S)-5,6,7,8-tetrahydrofolate pocket.

It belongs to the SHMT family. As to quaternary structure, homodimer. It depends on pyridoxal 5'-phosphate as a cofactor.

The protein localises to the cytoplasm. It catalyses the reaction (6R)-5,10-methylene-5,6,7,8-tetrahydrofolate + glycine + H2O = (6S)-5,6,7,8-tetrahydrofolate + L-serine. It functions in the pathway one-carbon metabolism; tetrahydrofolate interconversion. It participates in amino-acid biosynthesis; glycine biosynthesis; glycine from L-serine: step 1/1. Functionally, catalyzes the reversible interconversion of serine and glycine with tetrahydrofolate (THF) serving as the one-carbon carrier. This reaction serves as the major source of one-carbon groups required for the biosynthesis of purines, thymidylate, methionine, and other important biomolecules. Also exhibits THF-independent aldolase activity toward beta-hydroxyamino acids, producing glycine and aldehydes, via a retro-aldol mechanism. The chain is Serine hydroxymethyltransferase from Lactobacillus johnsonii (strain CNCM I-12250 / La1 / NCC 533).